The sequence spans 337 residues: Large ribosomal subunit protein uL3 (337 aa).

The protein belongs to the universal ribosomal protein uL3 family. In terms of assembly, part of the 50S ribosomal subunit. Forms a cluster with proteins L14 and L24e.

Functionally, one of the primary rRNA binding proteins, it binds directly near the 3'-end of the 23S rRNA, where it nucleates assembly of the 50S subunit. The protein is Large ribosomal subunit protein uL3 of Methanosphaerula palustris (strain ATCC BAA-1556 / DSM 19958 / E1-9c).